The following is a 176-amino-acid chain: Ribosome maturation factor RimM (176 aa).

In terms of domain architecture, PRC barrel spans Glu-97–Phe-176.

It belongs to the RimM family. Binds ribosomal protein uS19.

It localises to the cytoplasm. In terms of biological role, an accessory protein needed during the final step in the assembly of 30S ribosomal subunit, possibly for assembly of the head region. Essential for efficient processing of 16S rRNA. May be needed both before and after RbfA during the maturation of 16S rRNA. It has affinity for free ribosomal 30S subunits but not for 70S ribosomes. The polypeptide is Ribosome maturation factor RimM (Shewanella oneidensis (strain ATCC 700550 / JCM 31522 / CIP 106686 / LMG 19005 / NCIMB 14063 / MR-1)).